Reading from the N-terminus, the 152-residue chain is Methylglyoxal synthase (152 aa).

Residues 6-152 enclose the MGS-like domain; sequence RTLATEKNIA…YEGYLKERLK (147 aa). Substrate contacts are provided by residues His-19, Lys-23, 45–48, and 65–66; these read TGTT and SG. The Proton donor/acceptor role is filled by Asp-71. Substrate is bound at residue His-98.

This sequence belongs to the methylglyoxal synthase family.

The enzyme catalyses dihydroxyacetone phosphate = methylglyoxal + phosphate. Its function is as follows. Catalyzes the formation of methylglyoxal from dihydroxyacetone phosphate. The chain is Methylglyoxal synthase from Proteus mirabilis (strain HI4320).